The primary structure comprises 347 residues: Gas vesicle ATPase GvpN (347 aa).

Positions 1-50 (MTNSSRERKVRGSQIRTSRREKQDKNARNRTEKELTRLENHQTHRTKNGT) are disordered. A compositionally biased stretch (basic and acidic residues) spans 18-42 (SRREKQDKNARNRTEKELTRLENHQ). Position 91–98 (91–98 (GPTGCGKT)) interacts with ATP.

This sequence belongs to the CbbQ/NirQ/NorQ/GpvN family. In terms of assembly, forms homodimers, a GvpN-GvpO heterodimer, interacts with GvpC and GvpL, might interact with GvpA.

The protein resides in the gas vesicle. The protein localises to the cytoplasm. The catalysed reaction is ATP + H2O = ADP + phosphate + H(+). An ATPase that functions in gas vesicle formation. A minor component of the gas vesicle, also found in soluble extracts. Gas vesicles are hollow, gas filled proteinaceous nanostructures found in some microorganisms. They allow positioning of halobacteria at the optimal depth for growth in the poorly aerated, shallow brine pools of their habitat. Its function is as follows. Expression of a 9.5 kb mc-vac DNA fragment containing 2 divergently transcribed regions (gvpD-gvpE-gvpF-gvpG-gvpH-gvpI-gvpJ-gvpK-gvpL-gvpM and gvpA-gvpC-gvpN-gvpO) allows H.volcanii to produce gas vesicles. This Haloferax mediterranei (strain ATCC 33500 / DSM 1411 / JCM 8866 / NBRC 14739 / NCIMB 2177 / R-4) (Halobacterium mediterranei) protein is Gas vesicle ATPase GvpN.